Here is a 377-residue protein sequence, read N- to C-terminus: Nitric oxide reductase FlRd-NAD(+) reductase (377 aa).

The protein belongs to the FAD-dependent oxidoreductase family. It depends on FAD as a cofactor.

The protein localises to the cytoplasm. The enzyme catalyses 2 reduced [nitric oxide reductase rubredoxin domain] + NAD(+) + H(+) = 2 oxidized [nitric oxide reductase rubredoxin domain] + NADH. It functions in the pathway nitrogen metabolism; nitric oxide reduction. Its function is as follows. One of at least two accessory proteins for anaerobic nitric oxide (NO) reductase. Reduces the rubredoxin moiety of NO reductase. The sequence is that of Nitric oxide reductase FlRd-NAD(+) reductase from Salmonella heidelberg (strain SL476).